Reading from the N-terminus, the 563-residue chain is Quinidine resistance protein 1 (563 aa).

Residues 1 to 10 (MTKQQTSVMR) show a composition bias toward polar residues. Residues 1–50 (MTKQQTSVMRNASIAKEEREGSDNNNVDRSSSDAISDNDAERSNSHSEID) are disordered. The Cytoplasmic segment spans residues 1–75 (MTKQQTSVMR…KQKMLLVVQC (75 aa)). A compositionally biased stretch (low complexity) spans 23–33 (DNNNVDRSSSD). A compositionally biased stretch (basic and acidic residues) spans 39-49 (DAERSNSHSEI). A helical transmembrane segment spans residues 76–96 (AFTGFFSTVAGSIYYPVLTII). Over 97 to 108 (ERKFNITEELAN) the chain is Extracellular. The helical transmembrane segment at 109 to 129 (VTIVVYFIFQGVAPSIMGGLA) threads the bilayer. Topologically, residues 130–135 (DTFGRR) are cytoplasmic. The chain crosses the membrane as a helical span at residues 136–156 (PIVLWAILAYFCACIGLACAH). Residues 157–165 (NYAQILALR) lie on the Extracellular side of the membrane. Residues 166 to 186 (CLQAAGISPVIAINSGIMGDV) form a helical membrane-spanning segment. Over 187 to 195 (TTKVERGGY) the chain is Cytoplasmic. Residues 196 to 216 (VGLVAGFQVVGTAFGALIGAG) form a helical membrane-spanning segment. Residues 217–224 (LSSKWGWR) lie on the Extracellular side of the membrane. Residues 225–245 (AIFWFLAIGSGICLVFSTLLM) form a helical membrane-spanning segment. Over 246-296 (PETKRTLVGNGSVTPRSFLNRSLILHVGSVKKTLHLDDPDPETLEPRTSVD) the chain is Cytoplasmic. The chain crosses the membrane as a helical span at residues 297–317 (FLAPLKILHIREIDILLSIAG). Topologically, residues 318–341 (LQFSTWTTHQTALTIVLSKKYNLS) are extracellular. A helical transmembrane segment spans residues 342–362 (VAKIGLCFLPAGISTLTSIIS). Topologically, residues 363-421 (AGRYLNWSYRTRKVKYNRWIKEQELQLMEKYKGDKNKVAELIHSNSHYAFNLVEARLHP) are cytoplasmic. A helical transmembrane segment spans residues 422-442 (AFVTLLLSSIGFTAFGWCISV). Over 443–445 (KTP) the chain is Extracellular. The helical transmembrane segment at 446-466 (LAAVLCTSAFASLFSNCILTF) threads the bilayer. Topologically, residues 467–481 (STTLIVDLFPSKAST) are cytoplasmic. Residues 482–502 (ATGCLNLFRCLLSAIFIAALT) traverse the membrane as a helical segment. Residues 503–511 (KMVEKMRYG) lie on the Extracellular side of the membrane. Residues 512 to 532 (GVFTFLSAITSSSSLLLFYLL) traverse the membrane as a helical segment. Residues 533–563 (KNGKQLSFDRIRANDKSAGRSVGKNSEKVST) are Cytoplasmic-facing.

The protein belongs to the major facilitator superfamily. CAR1 family.

The protein localises to the cell membrane. Functionally, multidrug resistance transporter involved in resistance and adaptation to quinidine and ketoconazole. The protein is Quinidine resistance protein 1 (QDR1) of Saccharomyces cerevisiae (strain ATCC 204508 / S288c) (Baker's yeast).